Reading from the N-terminus, the 382-residue chain is UDP-4-amino-4-deoxy-L-arabinose--oxoglutarate aminotransferase (382 aa).

Lys183 carries the post-translational modification N6-(pyridoxal phosphate)lysine.

Belongs to the DegT/DnrJ/EryC1 family. ArnB subfamily. Homodimer. The cofactor is pyridoxal 5'-phosphate.

It catalyses the reaction UDP-4-amino-4-deoxy-beta-L-arabinose + 2-oxoglutarate = UDP-beta-L-threo-pentopyranos-4-ulose + L-glutamate. It functions in the pathway nucleotide-sugar biosynthesis; UDP-4-deoxy-4-formamido-beta-L-arabinose biosynthesis; UDP-4-deoxy-4-formamido-beta-L-arabinose from UDP-alpha-D-glucuronate: step 2/3. The protein operates within bacterial outer membrane biogenesis; lipopolysaccharide biosynthesis. Functionally, catalyzes the conversion of UDP-4-keto-arabinose (UDP-Ara4O) to UDP-4-amino-4-deoxy-L-arabinose (UDP-L-Ara4N). The modified arabinose is attached to lipid A and is required for resistance to polymyxin and cationic antimicrobial peptides. The chain is UDP-4-amino-4-deoxy-L-arabinose--oxoglutarate aminotransferase from Pseudomonas aeruginosa (strain ATCC 15692 / DSM 22644 / CIP 104116 / JCM 14847 / LMG 12228 / 1C / PRS 101 / PAO1).